We begin with the raw amino-acid sequence, 489 residues long: WRKY transcription factor 72B (489 aa).

Disordered regions lie at residues 1–100 (MENK…EMRE), 131–159 (QKET…QEAD), and 234–267 (DENE…RARV). 2 stretches are compositionally biased toward basic and acidic residues: residues 32–52 (GRKE…KDYM) and 83–100 (THKE…EMRE). Residues 84 to 132 (HKEQDDQLASAKDEMREVMEENQRLRMHLDRMMKEYRNLQNQFHDIVQK) are a coiled coil. Residues 138-147 (SSSTTVNTST) show a composition bias toward low complexity. The WRKY DNA-binding region spans 273 to 339 (CDAPTMNDGC…YEGTHNHTLP (67 aa)). 2 disordered regions span residues 356-381 (LLSG…PTTT) and 427-454 (TSTS…YNYN). Low complexity-rich tracts occupy residues 371–381 (TATTTTTPTTT) and 427–438 (TSTSSSSPSSLS).

The protein belongs to the WRKY group II-b family.

The protein localises to the nucleus. Functionally, in association with WRKY72A, contributes to basal defense against root-knot nematodes (RKNs) and potato aphids, as well as Mi-1-mediated gene-for-gene resistance to these pests. Both WRKY72A and WRKY72B are not required for gene-for-gene resistance mediated by Pto, another tomato R gene. The polypeptide is WRKY transcription factor 72B (Solanum lycopersicum (Tomato)).